Reading from the N-terminus, the 282-residue chain is tRNA (guanine-N(7)-)-methyltransferase (282 aa).

The tract at residues 1–31 (MSLTDDQASKRQAYRAAKEANRKELKHVKID) is disordered. The span at 16 to 31 (AAKEANRKELKHVKID) shows a compositional bias: basic and acidic residues. Residues Gly99, 122–123 (EI), 157–158 (NA), and Cys177 each bind S-adenosyl-L-methionine. Asp180 is a catalytic residue. Residue 255-257 (TEE) participates in S-adenosyl-L-methionine binding.

This sequence belongs to the class I-like SAM-binding methyltransferase superfamily. TrmB family. As to quaternary structure, forms a complex with TRM82.

Its subcellular location is the nucleus. The enzyme catalyses guanosine(46) in tRNA + S-adenosyl-L-methionine = N(7)-methylguanosine(46) in tRNA + S-adenosyl-L-homocysteine. The protein operates within tRNA modification; N(7)-methylguanine-tRNA biosynthesis. Functionally, catalyzes the formation of N(7)-methylguanine at position 46 (m7G46) in tRNA. The sequence is that of tRNA (guanine-N(7)-)-methyltransferase from Eremothecium gossypii (strain ATCC 10895 / CBS 109.51 / FGSC 9923 / NRRL Y-1056) (Yeast).